We begin with the raw amino-acid sequence, 448 residues long: RuvB-like 2 (448 aa).

An ATP-binding site is contributed by 73 to 80 (GEPGAGKT).

It belongs to the RuvB family. As to quaternary structure, forms homohexameric rings. May form a dodecamer with ruvb-1 made of two stacked hexameric rings. Expressed in gonadal cells.

Its subcellular location is the cytoplasm. The protein resides in the nucleus. It carries out the reaction ATP + H2O = ADP + phosphate + H(+). Possesses single-stranded DNA-stimulated ATPase and ATP-dependent DNA helicase (5' to 3') activity suggesting a role in nuclear processes such as recombination and transcription. May participate in several chromatin remodeling complexes that mediate the ATP-dependent exchange of histones and remodel chromatin by shifting nucleosomes. Involvement in these complexes is likely required for transcriptional activation of selected genes and DNA repair in response to DNA damage. Has a role in gonadal development. Involved in the endoplasmic reticulum (ER)-associated degradation (ERAD) pathway where it negatively regulates expression of ER stress response genes. Specifically, negatively controls the expression of ER homeostasis regulator ckb-2 in a cdc-48.1/2-dependent manner. The protein is RuvB-like 2 of Caenorhabditis elegans.